We begin with the raw amino-acid sequence, 286 residues long: Inositol polyphosphate multikinase alpha (286 aa).

Residues 1–22 (MQLKVPEHQVAGHIAKDGKPGP) are disordered.

Belongs to the inositol phosphokinase (IPK) family. Post-translationally, phosphorylated. In terms of tissue distribution, detected in leaves, stems, roots, siliques and flowers. Highly expressed in root tissues, anthers, the stigma, pollen grains and growing pollen tubes.

Its subcellular location is the nucleus. It localises to the cell membrane. The catalysed reaction is 1D-myo-inositol 1,4,5-trisphosphate + 2 ATP = 1D-myo-inositol 1,3,4,5,6-pentakisphosphate + 2 ADP + 2 H(+). It catalyses the reaction 1D-myo-inositol 1,3,4,6-tetrakisphosphate + ATP = 1D-myo-inositol 1,3,4,5,6-pentakisphosphate + ADP + H(+). Functionally, inositol phosphate kinase with a broad substrate specificity. Phosphorylates inositol 1,4,5-trisphosphate (Ins(1,4,5)P3), inositol 1,4,5,6-tetrakisphosphate (Ins(1,4,5,6)P4), inositol 1,3,4,5-tetrakisphosphate (Ins(1,3,4,5)P4), inositol 1,3,4,6-tetrakisphosphate (Ins(1,3,4,6)P4) and inositol 1,2,3,4,6-pentakisphosphate (Ins(1,2,3,4,6)P5) but not inositol 1,4-bisphosphate (Ins(1,4)P2), inositol 1,3,4-trisphosphate (Ins(1,3,4)P3), inositol 1,2,6-trisphosphate (Ins(1,2,6)P3), inositol 3,4,5,6-tetrakisphosphate (Ins(3,4,5,6)P4), inositol 1,3,4,5,6-pentakisphosphate (Ins(1,3,4,5,6)P5), inositol 1,2,4,5,6-pentakisphosphate (Ins(1,2,4,5,6)P5) or inositol hexakisphosphate (InsP6). Regulates pollen and root development probably through the regulation of InsP3-mediated calcium accumulation. The protein is Inositol polyphosphate multikinase alpha (IPK2a) of Arabidopsis thaliana (Mouse-ear cress).